The primary structure comprises 305 residues: MPITLPATLPAFDVLTHEGVMVMTPERAARQDIRPLRIGLLNLMPKKIQTENQFARLIGATPLQIDFQLIRMTEHQTKNTAAEHMEAFYRPFQEVKHEKFDGLIITGAPIEHLDFADVTYWDELCEVMDWTQTNVQSTFGVCWGGMAMIYHFHRVQKHRLQAKAFGCFRHRNVAPTSPYLRGFSDDFVIPVSRWTEMRQAEIDAAPGLRTLLASDEAGPCLVEDPGHRALYIFNHFEYDSDTLKQEYDRDVANGKPINVPANYYPDDDPSKPPLNRWRSHAHLLYGNWINEIYQSTPYDPQQIGR.

Residue C142 is the Acyl-thioester intermediate of the active site. 2 residues coordinate substrate: K163 and S192. Catalysis depends on H235, which acts as the Proton acceptor. Residue E237 is part of the active site. Residue R249 participates in substrate binding.

The protein belongs to the MetA family.

It is found in the cytoplasm. It catalyses the reaction L-homoserine + acetyl-CoA = O-acetyl-L-homoserine + CoA. Its pathway is amino-acid biosynthesis; L-methionine biosynthesis via de novo pathway; O-acetyl-L-homoserine from L-homoserine: step 1/1. Its function is as follows. Transfers an acetyl group from acetyl-CoA to L-homoserine, forming acetyl-L-homoserine. The protein is Homoserine O-acetyltransferase of Cereibacter sphaeroides (strain KD131 / KCTC 12085) (Rhodobacter sphaeroides).